We begin with the raw amino-acid sequence, 311 residues long: CID domain-containing protein 1 (311 aa).

In terms of domain architecture, CID spans 1-134 (MSDFTEQTLR…RLQEAHQQMK (134 aa)). A coiled-coil region spans residues 224-256 (MLEDYVKRLKEETKERESLETNLNMLIQNVRMS).

The sequence is that of CID domain-containing protein 1 (cids-1) from Caenorhabditis briggsae.